The sequence spans 410 residues: Cytochrome P450 monooxygenase mpsF (410 aa).

Residue Cys355 coordinates heme.

This sequence belongs to the cytochrome P450 family. Requires heme as cofactor.

The protein operates within secondary metabolite biosynthesis. Cytochrome P450 monooxygenase; part of the gene cluster that mediates the biosynthesis of macrophasetins, 3-decalinoyltetramic acids (DTAs) which feature a tetramate (pyrrolidine-2,4-dione) unit connected to a decalin fragment and that have potent bioactivities. The PKS-NRPS mpsA together with its associated enoylreductase partner mpsG incorporate one unit of acetyl-CoA, seven units of malonyl-CoA, and one unit of L-alanine to assemble the linear tetramic acid intermediate corresponding to the backbone of macrophasetins. Without the Diels-Alderase mpsD, the mpsA/G product can undergo the non-enzymatic intramolecular Diels-Alder (IMDA) reaction to generate both macrophasetin A and macrophasetin B. Catalyzed by mpsD, the linear tetramic acid intermediate is thoroughly converted to macrophasetin A via the endo-IMDA reaction in a regioselective and stereoselective manner. Finally, the cytochrome P450 monooxygenase mpsF catalyzes the hydroxylation at C20 to yield the end product macrophasetin C. This is Cytochrome P450 monooxygenase mpsF from Macrophomina phaseolina (strain MS6) (Charcoal rot fungus).